A 276-amino-acid polypeptide reads, in one-letter code: MPELPEVETVVRTLRGLVMGKTIERVSVHLARIVRQPDDVEAFKSLLVGQTIQDIQRRAKFIQFFLNEDVLVSHLRMEGRYGVYQADDPVEKHTHVVFHFTDGTELRYRDVRQFGTMDLFPKGKETTIGPLAKLGVEPLDKSFTPEVLGKLLKGRSTKIKPLLLNQECIVGLGNIYVDESLFKAGIHPEKPAGKLTDKEVIRLHESIVSTLQEAVEQGGSSIKSYVNGQGEMGMFQQSLLVYGRKDEACTKCGAEIIRFVVGGRGTHICPDCQKNQ.

Proline 2 serves as the catalytic Schiff-base intermediate with DNA. Glutamate 3 functions as the Proton donor in the catalytic mechanism. Lysine 60 serves as the catalytic Proton donor; for beta-elimination activity. 3 residues coordinate DNA: histidine 93, arginine 112, and arginine 155. Residues 240–274 form an FPG-type zinc finger; it reads LVYGRKDEACTKCGAEIIRFVVGGRGTHICPDCQK. Arginine 264 functions as the Proton donor; for delta-elimination activity in the catalytic mechanism.

It belongs to the FPG family. As to quaternary structure, monomer. Zn(2+) serves as cofactor.

The enzyme catalyses Hydrolysis of DNA containing ring-opened 7-methylguanine residues, releasing 2,6-diamino-4-hydroxy-5-(N-methyl)formamidopyrimidine.. It catalyses the reaction 2'-deoxyribonucleotide-(2'-deoxyribose 5'-phosphate)-2'-deoxyribonucleotide-DNA = a 3'-end 2'-deoxyribonucleotide-(2,3-dehydro-2,3-deoxyribose 5'-phosphate)-DNA + a 5'-end 5'-phospho-2'-deoxyribonucleoside-DNA + H(+). In terms of biological role, involved in base excision repair of DNA damaged by oxidation or by mutagenic agents. Acts as a DNA glycosylase that recognizes and removes damaged bases. Has a preference for oxidized purines, such as 7,8-dihydro-8-oxoguanine (8-oxoG). Has AP (apurinic/apyrimidinic) lyase activity and introduces nicks in the DNA strand. Cleaves the DNA backbone by beta-delta elimination to generate a single-strand break at the site of the removed base with both 3'- and 5'-phosphates. The polypeptide is Formamidopyrimidine-DNA glycosylase (Brevibacillus brevis (strain 47 / JCM 6285 / NBRC 100599)).